The primary structure comprises 686 residues: Terminal beta-(1-&gt;2)-arabinofuranosyltransferase (686 aa).

Positions 1 to 42 are disordered; the sequence is MTFSPQRPEFETGKQPDPETEHAGDFFEETSSSAPRAASNGS. Over residues 8–25 the composition is skewed to basic and acidic residues; the sequence is PEFETGKQPDPETEHAGD. The span at 29–42 shows a compositional bias: polar residues; it reads ETSSSAPRAASNGS. The next 10 helical transmembrane spans lie at 48 to 68, 127 to 147, 155 to 175, 180 to 200, 219 to 239, 261 to 281, 316 to 336, 353 to 373, 384 to 404, and 411 to 431; these read TLITTFLAALTAGIFAFWAGW, IALWLALLFTTAASIIGVLGT, IAVLLPAGVIGYFSLSPARDF, LEWGLSLMWISIQWLLLVLWA, IVNAGAITYALAFWSGLSWLV, WRVVLGILVAALPLPAAYQIF, GPYNLWLGLALLLAAGALTVW, TPGMAIALLVICALVHFLYVI, MLLLPLFAILLPVSVIPVNVV, and LVALVLVFSTWVWSTVVFVQG.

Belongs to the AftB family.

Its subcellular location is the membrane. The protein operates within cell wall biogenesis; cell wall polysaccharide biosynthesis. Functionally, involved in the biosynthesis of the arabinogalactan (AG) region of the mycolylarabinogalactan-peptidoglycan (mAGP) complex, an essential component of the cell wall. Catalyzes the transfer of arabinofuranosyl (Araf) residues from the sugar donor decaprenyl-phospho-arabinose (DPA) to the arabinan domain to form terminal beta-(1-&gt;2)-linked Araf residues, which marks the end point for AG arabinan biosynthesis before decoration with mycolic acids. The sequence is that of Terminal beta-(1-&gt;2)-arabinofuranosyltransferase (aftB) from Corynebacterium glutamicum (strain ATCC 13032 / DSM 20300 / JCM 1318 / BCRC 11384 / CCUG 27702 / LMG 3730 / NBRC 12168 / NCIMB 10025 / NRRL B-2784 / 534).